The sequence spans 661 residues: Potassium voltage-gated channel subfamily KQT member 1 (661 aa).

2 disordered regions span residues 1–29 and 42–88; these read MAAASTPPRAERKRXSWSRLPGAQRESAG and ESGP…SLDP. At 1 to 119 the chain is on the cytoplasmic side; that stretch reads MAAASTPPRA…YNFLERPTGW (119 aa). Ser27 is modified (phosphoserine; by PKA). The span at 54–85 shows a compositional bias: pro residues; it reads VSPPSAPEPAPPASPASPAPPAADQGPQPPVS. Residues 120 to 141 form a helical membrane-spanning segment; it reads KCFAYHFTVFLIVLVCLIFSVL. Topologically, residues 142 to 152 are extracellular; it reads STIEQYATLAT. Residues 153-175 form a helical membrane-spanning segment; sequence GTLFWMEIVLVVFFGTEYVVRLW. The Cytoplasmic portion of the chain corresponds to 176–191; sequence SAGCRSKYVGLWGRLR. The chain crosses the membrane as a helical span at residues 192–217; that stretch reads FARKPISIIDLIVVVASMVVLCVGSK. At 218–225 the chain is on the extracellular side; that stretch reads GQVFATSA. The chain crosses the membrane as a helical; Voltage-sensor span at residues 226–241; that stretch reads IRGIRFLQILRMLHVD. The segment at 237–245 is interaction with KCNE3; the sequence is MLHVDRQGG. The Cytoplasmic portion of the chain corresponds to 242–259; it reads RQGGTWRLLGSVVFIHRQ. Gln243 provides a ligand contact to a 1,2-diacyl-sn-glycero-3-phospho-(1D-myo-inositol-4,5-bisphosphate). Residues 260 to 282 form a helical membrane-spanning segment; the sequence is ELITTLYIGFLGLIFSSYFVYLA. Residues 283–298 are Extracellular-facing; that stretch reads EKDAVNESGRVEFGSY. N-linked (GlcNAc...) asparagine glycosylation is present at Asn288. Residues 299 to 319 constitute an intramembrane region (pore-forming); the sequence is ADALWWGVVTVTTIGYGDKVP. Residues 320-321 are Extracellular-facing; that stretch reads QT. A helical transmembrane segment spans residues 322–347; that stretch reads WVGKTIASCFSVFAISFFALPAGILG. Residues 348–661 are Cytoplasmic-facing; sequence SGFALKVQQK…VPRRDPEEGS (314 aa). Residues 369–381 are interaction with CALM; it reads AAASLIQTAWRCY. 2 positions are modified to phosphoserine: Ser406 and Ser408. The segment at 514-528 is interaction with CALM; calcium-dependent; sequence KVIRRMQYFVAKKKF. Residues 534-571 are interaction with KCNE1 C-terminus; the sequence is PYDVRDVIEQYSQGHLNLMVRIKELQRRLDQSIGKPSL. Residues 584-620 are a coiled coil; that stretch reads SNSIGARLNRVEDKVTQLDQRLVLIADMLQQLLALHQ. Positions 587 to 615 are interaction with AKAP9; it reads IGARLNRVEDKVTQLDQRLVLIADMLQQL. The segment at 588 to 619 is C-terminal assembly domain (tetramerization); it reads GARLNRVEDKVTQLDQRLVLIADMLQQLLALH. Residues 624–661 are disordered; that stretch reads HGGAHPAQARDGDPADPELFLPTYEQLTVPRRDPEEGS.

This sequence belongs to the potassium channel family. KQT (TC 1.A.1.15) subfamily. Kv7.1/KCNQ1 sub-subfamily. In terms of assembly, tetramer. Heterotetramer with KCNE1; targets to the membrane raft. Interacts (via C-terminus) with CALM; forms a heterooctameric structure (with 4:4 KCNQ1:CALM stoichiometry) in a calcium-independent manner. Interacts with AKAP9; targets protein kinase A (PKA) catalytic and regulatory subunits and protein phosphatase 1 (PP1) to the KCNQ1-KCNE1 complex, allowing PKA-mediated phosphorylation and increase of delayed rectifier potassium channel activity. Interacts with KCNE2; form a heterooligomer complex that targets to the membrane raft and leading to currents with an apparently instantaneous activation, a rapid deactivation process and a linear current-voltage relationship and decreases the amplitude of the outward current. Interacts with AP2M1; mediates estrogen-induced internalization via clathrin-coated vesicles. Interacts with NEDD4L; promotes internalization and decreases I(Ks) currents. Interacts with USP2; counteracts the NEDD4L-specific down-regulation of I(Ks) and restore plasma membrane localization. Heterotetramer with KCNQ5; has a voltage-gated potassium channel activity. Interacts with KCNE3; four KCNE3 molecules are bound to one KCNQ1 tetramer (4:4 KCNQ1:KCNE3 stoichiometry); alters membrane raft localization; affects KCNQ1 structure and gating properties. Interacts with KCNE4; impairs KCNQ1 localization in lipid rafts and inhibits voltage-gated potassium channel activity. Interacts with KCNE5; impairs KCNQ1 localization in lipid rafts and only conducts current upon strong and continued depolarization. Interacts with SLC5A3; forms coregulatory channel-transporter complexes that modulate Na(+)-coupled myo-inositol influx through the transporter. Phosphorylation at Ser-27 by PKA; increases delayed rectifier potassium channel activity of the KCNQ1-KCNE1 complex through a macromolecular complex that includes PKA, PP1, and the targeting protein AKAP9. In terms of processing, ubiquitinated by NEDD4L; promotes internalization. The ubiquitinylated form is internalized through a clathrin-mediated endocytosis by interacting with AP2M1 and is recycled back to the cell membrane via RAB4A and RAB11A. Post-translationally, deubiquitinated by USP2; counteracts the NEDD4L-specific down-regulation of I(Ks) and restores the membrane localization.

The protein resides in the cell membrane. It is found in the cytoplasmic vesicle membrane. It localises to the early endosome. Its subcellular location is the membrane raft. The protein localises to the endoplasmic reticulum. The protein resides in the basolateral cell membrane. It is found in the apical cell membrane. The catalysed reaction is K(+)(in) = K(+)(out). PIP2 molecule is essential to activate KCNQ channels by inducing the coupling of the voltage-sensing domain (VSD) and the pore-forming domain (PD). Upon channel activation, PIP2 disrupts the VSD-calmodulin/CALM interactions, causing the release of CALM from the VSD which triggers the opening of the gate. Calcium potentiates KCNQ1 channel current through calcium-bound CALM. Calcium-bound CALM competes with PIP2 to stabilize the channel open state. Its function is as follows. Pore-forming subunit of the voltage-gated potassium (Kv) channel involved in the regulation of cardiomyocyte excitability and important in normal development and functions of myocardium, inner ear, stomach and colon. Associates with KCNE beta subunits that modulates current kinetics. Induces a voltage-dependent by rapidly activating and slowly deactivating potassium-selective outward current. Also promotes a delayed voltage activated potassium current showing outward rectification characteristic. During beta-adrenergic receptor stimulation participates in cardiac repolarization by associating with KCNE1 to form the I(Ks) cardiac potassium current that increases the amplitude and slows down the activation kinetics of outward potassium current I(Ks). Muscarinic agonist oxotremorine-M strongly suppresses KCNQ1/KCNE1 current. When associated with KCNE3, forms the potassium channel that is important for cyclic AMP-stimulated intestinal secretion of chloride ions. This interaction with KCNE3 is reduced by 17beta-estradiol, resulting in the reduction of currents. During conditions of increased substrate load, maintains the driving force for proximal tubular and intestinal sodium ions absorption, gastric acid secretion, and cAMP-induced jejunal chloride ions secretion. Allows the provision of potassium ions to the luminal membrane of the secretory canaliculus in the resting state as well as during stimulated acid secretion. When associated with KCNE2, forms a heterooligomer complex leading to currents with an apparently instantaneous activation, a rapid deactivation process and a linear current-voltage relationship and decreases the amplitude of the outward current. When associated with KCNE4, inhibits voltage-gated potassium channel activity. When associated with KCNE5, this complex only conducts current upon strong and continued depolarization. Also forms a heterotetramer with KCNQ5 that has a voltage-gated potassium channel activity. Binds with phosphatidylinositol 4,5-bisphosphate. KCNQ1-KCNE2 channel associates with Na(+)-coupled myo-inositol symporter in the apical membrane of choroid plexus epithelium and regulates the myo-inositol gradient between blood and cerebrospinal fluid with an impact on neuron excitability. The protein is Potassium voltage-gated channel subfamily KQT member 1 of Oryctolagus cuniculus (Rabbit).